We begin with the raw amino-acid sequence, 139 residues long: D-ribose pyranase (139 aa).

His20 acts as the Proton donor in catalysis. Substrate contacts are provided by residues Asp28, His106, and 128–130 (YAN).

This sequence belongs to the RbsD / FucU family. RbsD subfamily. In terms of assembly, homodecamer.

It localises to the cytoplasm. The catalysed reaction is beta-D-ribopyranose = beta-D-ribofuranose. It participates in carbohydrate metabolism; D-ribose degradation; D-ribose 5-phosphate from beta-D-ribopyranose: step 1/2. Its function is as follows. Catalyzes the interconversion of beta-pyran and beta-furan forms of D-ribose. In Photorhabdus laumondii subsp. laumondii (strain DSM 15139 / CIP 105565 / TT01) (Photorhabdus luminescens subsp. laumondii), this protein is D-ribose pyranase.